The chain runs to 31 residues: LysM-domain containing protein (31 aa).

Residues 1–28 form a LysM 1 repeat; it reads YSPSLTDLQSYNAMNGPALKAGDILAVP.

The chain is LysM-domain containing protein from Jatropha curcas (Barbados nut).